Consider the following 238-residue polypeptide: Uridylate kinase (238 aa).

10 to 13 lines the ATP pocket; it reads KFSG. The interval 18–23 is involved in allosteric activation by GTP; sequence GGNGFG. Residue Gly52 participates in UMP binding. The ATP site is built by Gly53 and Arg57. Residues Asp73 and 134–141 contribute to the UMP site; that span reads TGNPFFTT. 3 residues coordinate ATP: Thr161, Tyr167, and Asp170.

This sequence belongs to the UMP kinase family. Homohexamer.

The protein localises to the cytoplasm. It catalyses the reaction UMP + ATP = UDP + ADP. It participates in pyrimidine metabolism; CTP biosynthesis via de novo pathway; UDP from UMP (UMPK route): step 1/1. Allosterically activated by GTP. Inhibited by UTP. Functionally, catalyzes the reversible phosphorylation of UMP to UDP. The chain is Uridylate kinase from Campylobacter fetus subsp. fetus (strain 82-40).